A 311-amino-acid polypeptide reads, in one-letter code: N-acetylmuramic acid 6-phosphate etherase (311 aa).

The region spanning 66–229 (VAVRMARGGR…STITMIRLGK (164 aa)) is the SIS domain. Residue E94 is the Proton donor of the active site. E125 is a catalytic residue.

Belongs to the GCKR-like family. MurNAc-6-P etherase subfamily. As to quaternary structure, homodimer.

It catalyses the reaction N-acetyl-D-muramate 6-phosphate + H2O = N-acetyl-D-glucosamine 6-phosphate + (R)-lactate. It functions in the pathway amino-sugar metabolism; N-acetylmuramate degradation. Its function is as follows. Specifically catalyzes the cleavage of the D-lactyl ether substituent of MurNAc 6-phosphate, producing GlcNAc 6-phosphate and D-lactate. This is N-acetylmuramic acid 6-phosphate etherase from Streptomyces coelicolor (strain ATCC BAA-471 / A3(2) / M145).